Reading from the N-terminus, the 100-residue chain is NADH-quinone oxidoreductase subunit K (100 aa).

Transmembrane regions (helical) follow at residues 4-24, 28-48, and 60-80; these read LQHGLILAAVLFVLGFTCLVL, LLFMLIGLEIMINSAALAFVV, and IMYILAISLAAAEASIGLALL.

It belongs to the complex I subunit 4L family. As to quaternary structure, NDH-1 is composed of 13 different subunits. Subunits NuoA, H, J, K, L, M, N constitute the membrane sector of the complex.

It is found in the cell inner membrane. The catalysed reaction is a quinone + NADH + 5 H(+)(in) = a quinol + NAD(+) + 4 H(+)(out). NDH-1 shuttles electrons from NADH, via FMN and iron-sulfur (Fe-S) centers, to quinones in the respiratory chain. The immediate electron acceptor for the enzyme in this species is believed to be ubiquinone. Couples the redox reaction to proton translocation (for every two electrons transferred, four hydrogen ions are translocated across the cytoplasmic membrane), and thus conserves the redox energy in a proton gradient. The polypeptide is NADH-quinone oxidoreductase subunit K (Proteus mirabilis (strain HI4320)).